Reading from the N-terminus, the 513-residue chain is Histidine ammonia-lyase (513 aa).

Residues 144–146 constitute a cross-link (5-imidazolinone (Ala-Gly)); the sequence is ASG. A 2,3-didehydroalanine (Ser) modification is found at serine 145.

Belongs to the PAL/histidase family. In terms of processing, contains an active site 4-methylidene-imidazol-5-one (MIO), which is formed autocatalytically by cyclization and dehydration of residues Ala-Ser-Gly.

The protein localises to the cytoplasm. It catalyses the reaction L-histidine = trans-urocanate + NH4(+). Its pathway is amino-acid degradation; L-histidine degradation into L-glutamate; N-formimidoyl-L-glutamate from L-histidine: step 1/3. The chain is Histidine ammonia-lyase from Streptococcus gordonii (strain Challis / ATCC 35105 / BCRC 15272 / CH1 / DL1 / V288).